Reading from the N-terminus, the 303-residue chain is Tyrosine recombinase XerC (303 aa).

Residues 3-89 (IQNDQWVSAF…TLRSFYQFLV (87 aa)) form the Core-binding (CB) domain. In terms of domain architecture, Tyr recombinase spans 110–297 (KLPSFLYEEE…TKDRLRDVYR (188 aa)). Catalysis depends on residues Arg-150, Lys-174, His-249, Arg-252, and His-275. The active-site O-(3'-phospho-DNA)-tyrosine intermediate is Tyr-284.

It belongs to the 'phage' integrase family. XerC subfamily. In terms of assembly, forms a cyclic heterotetrameric complex composed of two molecules of XerC and two molecules of XerD.

It localises to the cytoplasm. Functionally, site-specific tyrosine recombinase, which acts by catalyzing the cutting and rejoining of the recombining DNA molecules. The XerC-XerD complex is essential to convert dimers of the bacterial chromosome into monomers to permit their segregation at cell division. It also contributes to the segregational stability of plasmids. The protein is Tyrosine recombinase XerC of Halalkalibacterium halodurans (strain ATCC BAA-125 / DSM 18197 / FERM 7344 / JCM 9153 / C-125) (Bacillus halodurans).